The chain runs to 427 residues: Gamma-glutamyl phosphate reductase (427 aa).

The protein belongs to the gamma-glutamyl phosphate reductase family.

Its subcellular location is the cytoplasm. It catalyses the reaction L-glutamate 5-semialdehyde + phosphate + NADP(+) = L-glutamyl 5-phosphate + NADPH + H(+). It functions in the pathway amino-acid biosynthesis; L-proline biosynthesis; L-glutamate 5-semialdehyde from L-glutamate: step 2/2. Functionally, catalyzes the NADPH-dependent reduction of L-glutamate 5-phosphate into L-glutamate 5-semialdehyde and phosphate. The product spontaneously undergoes cyclization to form 1-pyrroline-5-carboxylate. The polypeptide is Gamma-glutamyl phosphate reductase (Anaeromyxobacter dehalogenans (strain 2CP-1 / ATCC BAA-258)).